The following is a 575-amino-acid chain: Melatonin-related receptor (575 aa).

The Extracellular segment spans residues 1–30; the sequence is MGRTLAVPTPYGCIGCKLPQPDYPPALIVF. The chain crosses the membrane as a helical span at residues 31-51; that stretch reads MFCAMVITIVVDLIGNSMVIL. Residues 52–64 are Cytoplasmic-facing; the sequence is AVSKNKKLRNSGN. Residues 65-85 form a helical membrane-spanning segment; it reads VFVVSLSVADMLVAIYPYPLM. Over 86 to 103 the chain is Extracellular; sequence LHAMAIGGWDLSKLQCQM. Cysteines 101 and 178 form a disulfide. Residues 104-124 traverse the membrane as a helical segment; it reads VGFITGLSVVGSIFNIMAIAI. Topologically, residues 125–143 are cytoplasmic; the sequence is NRYCYICHSLQYERIFSVR. The chain crosses the membrane as a helical span at residues 144–164; that stretch reads NTCIYLAVTWIMTVLAVLPNM. The Extracellular segment spans residues 165–188; sequence YIGTIEYDPRTYTCIFNYVNNPAF. A helical transmembrane segment spans residues 189 to 209; the sequence is AVTIVCIHFVLPLLIVGFCYV. At 210–239 the chain is on the cytoplasmic side; that stretch reads KIWTKVLAARDPAGQNPDNQLAEVRNFLTM. Residues 240–260 traverse the membrane as a helical segment; that stretch reads FVIFLLFAVCWCPINALTVLV. The Extracellular segment spans residues 261–273; it reads AVNPKEMAGKIPN. A helical transmembrane segment spans residues 274–294; sequence WVYLAAYFIAYFNSCLNAVIY. The Cytoplasmic portion of the chain corresponds to 295-575; it reads GVLNENFRRE…VDADSDEMAV (281 aa). Disordered stretches follow at residues 368-421 and 446-474; these read VPLP…TVYP and SSHP…TGYT. Residues 455 to 474 are compositionally biased toward polar residues; that stretch reads PSKTAISPATSFPKPTTGYT.

The protein belongs to the G-protein coupled receptor 1 family. As to quaternary structure, homodimer, and heterodimer with MTNR1A and MTNR1B. Interacts with KAT5. Interacts with RTN4 isoform A/NOGO-A. Interacts with TGFBR1.

Its subcellular location is the cell membrane. Its function is as follows. G protein-coupled receptor that plays a role in numerous physiological processes including regulation of energy metabolism, neurite outgrowth or cell migration. Promotes self-renewal and neuronal differentiation of neural progenitor cells through activation of the NOTCH and WNT/beta-catenin signaling pathways. Modulates the KAT5-dependent glucocorticoid receptor signaling by modulating KAT5 subcellular compartmentalisation. Also plays a role in the activation TGFBR1 in the absence of TGFBR2 by interfering with FKBP1A binding to TGFBR1, leading to induction of both canonical and non-canonical SMAD signaling pathways resulting in inhibition of proliferation or promotion of migration. This chain is Melatonin-related receptor (GPR50), found in Ovis aries (Sheep).